Here is a 122-residue protein sequence, read N- to C-terminus: Bet1-like SNARE 1-1 (122 aa).

Residues 1-103 are Cytoplasmic-facing; sequence MNPRREPRGG…VFETKSSRRM (103 aa). In terms of domain architecture, t-SNARE coiled-coil homology spans 32-94; the sequence is EINEHENERA…SGTMDRFKTV (63 aa). Serine 56 bears the Phosphoserine mark. A helical; Anchor for type IV membrane protein transmembrane segment spans residues 104-121; that stretch reads LTLVASFVGLFLVIYYLT. Residue arginine 122 is a topological domain, vesicular.

Belongs to the BET1 family.

The protein resides in the golgi apparatus membrane. It localises to the endoplasmic reticulum membrane. Required for vesicular transport from the ER to the Golgi complex. Functions as a SNARE associated with ER-derived vesicles. This chain is Bet1-like SNARE 1-1 (BET11), found in Arabidopsis thaliana (Mouse-ear cress).